Reading from the N-terminus, the 292-residue chain is Polyisoprenoid diphosphate/phosphate phosphohydrolase PLPP6 (292 aa).

Disordered stretches follow at residues 1–34 (MPSP…SGGG) and 66–86 (GSFP…PPED). Over 1-131 (MPSPRRTIEG…SAWGSVRPLM (131 aa)) the chain is Cytoplasmic. Over residues 10–25 (GRPLGSSGGSSVPGSP) the composition is skewed to low complexity. Serine 24 and serine 67 each carry phosphoserine. The segment covering 69–79 (PLAASGPAQAA) has biased composition (low complexity). Residues 132-152 (KLLEISGHGIPWLLGTLYCLL) form a helical membrane-spanning segment. The Lumenal segment spans residues 153–161 (RSDSWAGRE). The chain crosses the membrane as a helical span at residues 162–182 (VLMNLLFALLLDLLLVAVIKG). The tract at residues 181–189 (KGLVRRRRP) is phosphatase sequence motif I. At 183 to 225 (LVRRRRPAHNQKDMFFTLSVDRYSFPSGHATRAALVSRFILNH) the chain is on the cytoplasmic side. The phosphatase sequence motif II stretch occupies residues 208–211 (PSGH). The active-site Proton donors is histidine 211. The chain crosses the membrane as a helical span at residues 226-246 (LVLAIPLRVLVVLWAFVLGLS). The tract at residues 246-257 (SRVMLGRHNVTD) is phosphatase sequence motif III. Over 247 to 257 (RVMLGRHNVTD) the chain is Lumenal. Histidine 253 functions as the Nucleophile in the catalytic mechanism. The chain crosses the membrane as a helical span at residues 258-278 (VAFGFFLGYMQYSIVDYCWLS). At 279-292 (PHNVPVLFVLWNQQ) the chain is on the cytoplasmic side.

It belongs to the PA-phosphatase related phosphoesterase family. In terms of processing, phosphorylation by PKC activates the phosphatase activity towards presqualene diphosphate.

It is found in the endoplasmic reticulum membrane. The protein localises to the nucleus envelope. Its subcellular location is the nucleus inner membrane. The catalysed reaction is presqualene diphosphate + H2O = presqualene phosphate + phosphate + H(+). It carries out the reaction presqualene phosphate + H2O = presqualene alcohol + phosphate. It catalyses the reaction (2E,6E)-farnesyl diphosphate + H2O = (2E,6E)-farnesyl phosphate + phosphate + H(+). The enzyme catalyses (2E,6E)-farnesyl phosphate + H2O = (2E,6E)-farnesol + phosphate. The catalysed reaction is (2E,6E,10E)-geranylgeranyl diphosphate + H2O = (2E,6E,10E)-geranylgeranyl phosphate + phosphate + H(+). It carries out the reaction (2E,6E,10E)-geranylgeranyl phosphate + H2O = (2E,6E,10E)-geranylgeraniol + phosphate. It catalyses the reaction (2E)-geranyl diphosphate + H2O = (2E)-geranyl phosphate + phosphate + H(+). The enzyme catalyses (2E)-geranyl phosphate + H2O = (2E)-geraniol + phosphate. The catalysed reaction is 1,2-dihexadecanoyl-sn-glycero-3-phosphate + H2O = 1,2-dihexadecanoyl-sn-glycerol + phosphate. In terms of biological role, magnesium-independent polyisoprenoid diphosphatase that catalyzes the sequential dephosphorylation of presqualene, farnesyl, geranyl and geranylgeranyl diphosphates. Functions in the innate immune response through the dephosphorylation of presqualene diphosphate which acts as a potent inhibitor of the signaling pathways contributing to polymorphonuclear neutrophils activation. May regulate the biosynthesis of cholesterol and related sterols by dephosphorylating presqualene and farnesyl diphosphate, two key intermediates in this biosynthetic pathway. May also play a role in protein prenylation by acting on farnesyl diphosphate and its derivative geranylgeranyl diphosphate, two precursors for the addition of isoprenoid anchors to membrane proteins. Has a lower activity towards phosphatidic acid (PA), but through phosphatidic acid dephosphorylation may participate in the biosynthesis of phospholipids and triacylglycerols. May also act on ceramide-1-P, lysophosphatidic acid (LPA) and sphing-4-enine 1-phosphate/sphingosine-1-phosphate. The sequence is that of Polyisoprenoid diphosphate/phosphate phosphohydrolase PLPP6 from Mus musculus (Mouse).